The sequence spans 300 residues: Formyltetrahydrofolate deformylase (300 aa).

Positions 21 to 102 constitute an ACT domain; the sequence is RLLVSCPDQP…MTWSLTLASE (82 aa). Asp-244 is a catalytic residue.

It belongs to the PurU family.

The catalysed reaction is (6R)-10-formyltetrahydrofolate + H2O = (6S)-5,6,7,8-tetrahydrofolate + formate + H(+). Its pathway is purine metabolism; IMP biosynthesis via de novo pathway; formate from 10-formyl-5,6,7,8-tetrahydrofolate: step 1/1. Its function is as follows. Catalyzes the hydrolysis of 10-formyltetrahydrofolate (formyl-FH4) to formate and tetrahydrofolate (FH4). The chain is Formyltetrahydrofolate deformylase from Bacillus subtilis (strain 168).